A 429-amino-acid polypeptide reads, in one-letter code: MALRPVVLRRAPAHSRGILTRPGPPRPRGPLPRTPWTTRGPPPDQLARVVERRPVREQVELDTVTYAGRQYFVPGLARPRFPPWDRGWREPWHSPGPRYEDMPLRKERGCFICHQRVRMLEGVRQAQWLTKTKLVQGLPAKVLSIAENPAYQLQEQEEAVHRAVAHARLWETTEVSPRREKYCPVLFEDLIHLCRSMSVKYPSLARRMLARNYRIAATWERESTLLQIRGLNGILMNSMTPIPPVASKEEILATKDHVLETFYPISPTIDLQEVNVYQELNDTGFKDGYPYSHPHTLYFLESANKRPNRFRPEQLRAKMLMFAFGNALAKAKVLYGNDPQVLEQPIVVQSVGTDGQLFQFLVFQLNTTDLVSNDGIKNLVWIDSDQNLYESAQCVPEVKKRVVTKPTGIYGLQPETFKKFLALYLHGTV.

The transit peptide at 1-29 (MALRPVVLRRAPAHSRGILTRPGPPRPRG) directs the protein to the mitochondrion. Positions 12 to 45 (PAHSRGILTRPGPPRPRGPLPRTPWTTRGPPPDQ) are disordered. A compositionally biased stretch (pro residues) spans 22-33 (PGPPRPRGPLPR).

This sequence belongs to the mitochondrion-specific ribosomal protein mL37 family. Component of the mitochondrial ribosome large subunit (39S) which comprises a 16S rRNA and about 50 distinct proteins.

Its subcellular location is the mitochondrion. This Gallus gallus (Chicken) protein is Large ribosomal subunit protein mL37 (MRPL37).